We begin with the raw amino-acid sequence, 116 residues long: Large ribosomal subunit protein bL17 (116 aa).

It belongs to the bacterial ribosomal protein bL17 family. As to quaternary structure, part of the 50S ribosomal subunit. Contacts protein L32.

The polypeptide is Large ribosomal subunit protein bL17 (Prochlorococcus marinus subsp. pastoris (strain CCMP1986 / NIES-2087 / MED4)).